The sequence spans 205 residues: Recombination protein RecR (205 aa).

The C4-type zinc-finger motif lies at 64–79 (CSRCYFITQNDLCAIC). Residues 87–182 (RIVCVVEEPL…RVTRLARGLP (96 aa)) form the Toprim domain.

Belongs to the RecR family.

In terms of biological role, may play a role in DNA repair. It seems to be involved in an RecBC-independent recombinational process of DNA repair. It may act with RecF and RecO. This is Recombination protein RecR from Roseiflexus castenholzii (strain DSM 13941 / HLO8).